We begin with the raw amino-acid sequence, 378 residues long: Ribosomal RNA large subunit methyltransferase G (378 aa).

It belongs to the methyltransferase superfamily. RlmG family.

Its subcellular location is the cytoplasm. The catalysed reaction is guanosine(1835) in 23S rRNA + S-adenosyl-L-methionine = N(2)-methylguanosine(1835) in 23S rRNA + S-adenosyl-L-homocysteine + H(+). In terms of biological role, specifically methylates the guanine in position 1835 (m2G1835) of 23S rRNA. The sequence is that of Ribosomal RNA large subunit methyltransferase G from Salmonella paratyphi B (strain ATCC BAA-1250 / SPB7).